An 805-amino-acid chain; its full sequence is G-type lectin S-receptor-like serine/threonine-protein kinase SD1-29 (805 aa).

An N-terminal signal peptide occupies residues 1–21 (MGMVLFACLLLLIIFPTCGYA). In terms of domain architecture, Bulb-type lectin spans 22–141 (AINTSSPLSI…VSGNKLWQSF (120 aa)). Over 22–428 (AINTSSPLSI…SELAGSSRRK (407 aa)) the chain is Extracellular. Residues Asn24, Asn50, Asn85, Asn91, and Asn248 are each glycosylated (N-linked (GlcNAc...) asparagine). One can recognise an EGF-like domain in the interval 277 to 313 (PENPCDLYGRCGPYGLCVRSDPPKCECLKGFVPKSDE). 2 disulfides stabilise this stretch: Cys281–Cys293 and Cys287–Cys301. N-linked (GlcNAc...) asparagine glycosylation is found at Asn319 and Asn378. A PAN domain is found at 332-418 (CQAKSSMKTQ…GEFLFIRLAS (87 aa)). 2 cysteine pairs are disulfide-bonded: Cys371/Cys392 and Cys375/Cys381. The helical transmembrane segment at 429-449 (IIVGTTVSLSIFLILVFAAIM) threads the bilayer. Residues 450–805 (LWRYRAKQND…EMTESMIQGR (356 aa)) lie on the Cytoplasmic side of the membrane. The Protein kinase domain maps to 488 to 773 (FSPSNKLGQG…DLPVPKQPIF (286 aa)). ATP is bound by residues 494–502 (LGQGGFGPV) and Lys516. A phosphoserine mark is found at Ser522 and Ser537. The segment at 577–594 (CLKFELDWPKRFNIIQGI) is caM-binding. A Phosphotyrosine modification is found at Tyr600. Asp613 serves as the catalytic Proton acceptor. Phosphoserine is present on residues Ser617 and Ser630. Thr647 carries the phosphothreonine modification. Residues Ser690 and Ser793 each carry the phosphoserine modification.

The protein belongs to the protein kinase superfamily. Ser/Thr protein kinase family. Interacts with PUB9, PUB13, PUB14, PUB29, PUB38, PUB44 and PUB45. Interacts with PBL34, PBL35 and PBL36. Post-translationally, autophosphorylated at Tyr-600. Autophosphorylation at Tyr-600 is required for downstream phosphorylation of the receptor-like cytoplasmic kinase PBL34, PBL35 and PBL36, and activation of plant immunity.

It localises to the cell membrane. The enzyme catalyses L-seryl-[protein] + ATP = O-phospho-L-seryl-[protein] + ADP + H(+). It catalyses the reaction L-threonyl-[protein] + ATP = O-phospho-L-threonyl-[protein] + ADP + H(+). It carries out the reaction L-tyrosyl-[protein] + ATP = O-phospho-L-tyrosyl-[protein] + ADP + H(+). Its function is as follows. S-domain receptor protein kinase involved in lipopolysaccharide (LPS) sensing. Specifically detects LPS of Pseudomonas and Xanthomonas species. LPS are major components of the outer membrane of Gram-negative bacteria and are important microbe-associated molecular patterns (MAMPs) that trigger biphasic production of reactive oxygen species (ROS) and immune responses in plants. Seems to be only partially associated with the second LPS-triggered ROS burst. Mediates defense signaling in response to the medium-chain 3-hydroxy fatty acid 3-OH-C10:0, a pathogen-associated molecular pattern (PAMP) which induces autophosphorylation at Tyr-600. Autophosphorylation at Tyr-600 is required for downstream phosphorylation of the receptor-like cytoplasmic kinase PBL34, PBL35 and PBL36, and activation of plant immunity. Functionally, (Microbial infection) Targeted by the bacterial type III effector protein tyrosine phosphatase HopAO1 from Pseudomonas syringae. HopAO1 dephosphorylates Tyr-600, which suppresses the immune response. This Arabidopsis thaliana (Mouse-ear cress) protein is G-type lectin S-receptor-like serine/threonine-protein kinase SD1-29.